The primary structure comprises 225 residues: UPF0758 protein Bpet3149 (225 aa).

An MPN domain is found at 103–225; that stretch reads AMSEPGSVKR…VVSMAELGLL (123 aa). Zn(2+)-binding residues include histidine 174, histidine 176, and aspartate 187. Residues 174-187 carry the JAMM motif motif; sequence HNHPSGSAQPSQAD.

It belongs to the UPF0758 family.

This Bordetella petrii (strain ATCC BAA-461 / DSM 12804 / CCUG 43448) protein is UPF0758 protein Bpet3149.